The following is a 216-amino-acid chain: Translation initiation factor 6 (216 aa).

The protein belongs to the eIF-6 family.

Functionally, binds to the 50S ribosomal subunit and prevents its association with the 30S ribosomal subunit to form the 70S initiation complex. The sequence is that of Translation initiation factor 6 from Thermoplasma acidophilum (strain ATCC 25905 / DSM 1728 / JCM 9062 / NBRC 15155 / AMRC-C165).